The following is a 359-amino-acid chain: Endosome-associated-trafficking regulator 1 (359 aa).

Residues serine 18 and serine 74 each carry the phosphoserine modification. The segment at leucine 100–serine 125 is required for interaction with PTPN13. A disordered region spans residues serine 153–glycine 180. Residues leucine 159–alanine 174 are compositionally biased toward polar residues. Phosphoserine occurs at positions 167 and 171. Residues aspartate 185–serine 295 are a coiled coil.

Belongs to the ENTR1 family. In terms of assembly, found in a complex with ENTR1, PTPN13 and GIT1. Interacts with PTPN13 (via the FERM domain). Interacts (via N-terminus) with GIT1 (via N- and C-terminus); this interaction is direct. Interacts with NOD2. Interacts (via N-terminus) with IFT88. Interacts with VPS35. Post-translationally, phosphorylated.

The protein localises to the cytoplasm. Its subcellular location is the early endosome. It is found in the endosome. It localises to the recycling endosome. The protein resides in the midbody. The protein localises to the cytoskeleton. Its subcellular location is the microtubule organizing center. It is found in the centrosome. It localises to the cilium basal body. Functionally, endosome-associated protein that plays a role in membrane receptor sorting, cytokinesis and ciliogenesis. Involved in the endosome-to-plasma membrane trafficking and recycling of SNX27-retromer-dependent cargo proteins, such as GLUT1. Involved in the regulation of cytokinesis; the function may involve PTPN13 and GIT1. Plays a role in the formation of cilia. Involved in cargo protein localization, such as PKD2, at primary cilia. Involved in the presentation of the tumor necrosis factor (TNF) receptor TNFRSF1A on the cell surface, and hence in the modulation of the TNF-induced apoptosis. In Bos taurus (Bovine), this protein is Endosome-associated-trafficking regulator 1.